The sequence spans 447 residues: Signal recognition particle 54 kDa protein (447 aa).

GTP contacts are provided by residues 103-110 (GVQGSGKT), 185-189 (DTAGR), and 245-248 (TKMD).

The protein belongs to the GTP-binding SRP family. SRP54 subfamily. In terms of assembly, part of the signal recognition particle protein translocation system, which is composed of SRP and FtsY. Archaeal SRP consists of a 7S RNA molecule of 300 nucleotides and two protein subunits: SRP54 and SRP19.

It is found in the cytoplasm. It catalyses the reaction GTP + H2O = GDP + phosphate + H(+). Its function is as follows. Involved in targeting and insertion of nascent membrane proteins into the cytoplasmic membrane. Binds to the hydrophobic signal sequence of the ribosome-nascent chain (RNC) as it emerges from the ribosomes. The SRP-RNC complex is then targeted to the cytoplasmic membrane where it interacts with the SRP receptor FtsY. The protein is Signal recognition particle 54 kDa protein of Saccharolobus islandicus (strain Y.N.15.51 / Yellowstone #2) (Sulfolobus islandicus).